The following is a 373-amino-acid chain: Peptide chain release factor 2 (373 aa).

The residue at position 251 (Gln251) is an N5-methylglutamine.

The protein belongs to the prokaryotic/mitochondrial release factor family. In terms of processing, methylated by PrmC. Methylation increases the termination efficiency of RF2.

It localises to the cytoplasm. Peptide chain release factor 2 directs the termination of translation in response to the peptide chain termination codons UGA and UAA. In Salinispora arenicola (strain CNS-205), this protein is Peptide chain release factor 2.